Consider the following 451-residue polypeptide: D(1A) dopamine receptor (451 aa).

The Extracellular portion of the chain corresponds to 1–22; sequence MTFNITSMDEDVLLTERESSFR. An N-linked (GlcNAc...) asparagine glycan is attached at asparagine 4. The helical transmembrane segment at 23–48 threads the bilayer; it reads VLTGCFLSVLILSTLLGNTLVCAAVI. Residues 49-59 lie on the Cytoplasmic side of the membrane; sequence RFRHLRSKVTN. Residues 60–86 traverse the membrane as a helical segment; that stretch reads FFVISLAVSDLLVAVLVMPWKAVAEIA. Topologically, residues 87-95 are extracellular; it reads GFWPFGTFC. A disulfide bridge links cysteine 95 with cysteine 185. A helical membrane pass occupies residues 96-118; that stretch reads NIWVAFDIMCSTASILNLCVISV. Topologically, residues 119–137 are cytoplasmic; that stretch reads DRYWAISSPFRYERKMTPK. A helical transmembrane segment spans residues 138 to 162; that stretch reads VAFIMIGVAWTLSVLISFIPVQLNW. Over 163–191 the chain is Extracellular; that stretch reads HKAKTTSFFDLNITLHDRTMDNCDSSLNR. Residues 192–217 traverse the membrane as a helical segment; sequence TYAISSSLISFYIPVAIMIVTYTRIY. Topologically, residues 218-271 are cytoplasmic; sequence RIAAKQIRRISALERAAVHAKNCQNSTSNRNSLDCQQPESSLKTSFKRETKVLK. The chain crosses the membrane as a helical span at residues 272-298; that stretch reads TLSVIMGVFVCCWLPFFILNCIVPFCD. Over 299–315 the chain is Extracellular; the sequence is PSLTTSGTEPFCISSTT. The helical transmembrane segment at 316 to 340 threads the bilayer; sequence FDVFVWFGWANSSLNPIIYAFNADF. The Cytoplasmic segment spans residues 341-451; the sequence is RKAFSNLLGC…PITQNGQPKT (111 aa). Cysteine 350 carries S-palmitoyl cysteine lipidation.

Belongs to the G-protein coupled receptor 1 family. Brain.

The protein resides in the cell membrane. Its subcellular location is the cell projection. It is found in the cilium membrane. In terms of biological role, dopamine receptor whose activity is mediated by G proteins which activate adenylyl cyclase. This Xenopus laevis (African clawed frog) protein is D(1A) dopamine receptor (drd1).